A 144-amino-acid chain; its full sequence is Nucleoside diphosphate kinase (144 aa).

6 residues coordinate ATP: lysine 11, phenylalanine 59, arginine 87, threonine 93, arginine 104, and asparagine 114. Histidine 117 serves as the catalytic Pros-phosphohistidine intermediate.

It belongs to the NDK family. In terms of assembly, homotetramer. Requires Mg(2+) as cofactor.

The protein resides in the cytoplasm. It catalyses the reaction a 2'-deoxyribonucleoside 5'-diphosphate + ATP = a 2'-deoxyribonucleoside 5'-triphosphate + ADP. The enzyme catalyses a ribonucleoside 5'-diphosphate + ATP = a ribonucleoside 5'-triphosphate + ADP. Functionally, major role in the synthesis of nucleoside triphosphates other than ATP. The ATP gamma phosphate is transferred to the NDP beta phosphate via a ping-pong mechanism, using a phosphorylated active-site intermediate. The chain is Nucleoside diphosphate kinase from Sorangium cellulosum (strain So ce56) (Polyangium cellulosum (strain So ce56)).